A 435-amino-acid chain; its full sequence is MARGTALLGLTSLLLGLVNGQKPGETKEVHPQLTTFRCTKKGGCKPATNYIVLDSLSHPIHRAEGLGWGNCGDWGNPPPKDVCPDVESCAKNCIMEGIPDYSQYGVTTNGTSLRLQHILPDGRVPSPRVYLLDKTERRYEMLHLTGFEFTFDVDATKLPCGMNSALYLSEMHPTGAKSKHNPGGAYYGTGYCDAQCFVTPFINGLGNIEGKGSCCNEMDIWEANSRASHVAPHVCNKKGLYLCEGEECAFEGVCDKNGCGWNPYRVNVTDYYGRGEEFKVNTLKPFTVVTQFLANRKGKLEKIHRFYVQDGKIIESFYTNKEGIPYTNMIEDEFCAATGSRKYMELGATQGMGEALTRGMVLAMSIWWDQGGNMEWLDHGEAGPCAKGEGAPSNVVQVEPFPEVTYTNLRWGEIGSTYQEVQKPKPKPGPGPRSD.

The signal sequence occupies residues 1 to 20; the sequence is MARGTALLGLTSLLLGLVNG. At Gln-21 the chain carries Pyrrolidone carboxylic acid. 3 disulfide bridges follow: Cys-38–Cys-44, Cys-71–Cys-93, and Cys-83–Cys-89. Asn-109 is a glycosylation site (N-linked (GlcNAc...) asparagine). 6 disulfides stabilise this stretch: Cys-160/Cys-385, Cys-192/Cys-215, Cys-196/Cys-214, Cys-235/Cys-254, Cys-243/Cys-248, and Cys-259/Cys-335. Glu-217 (nucleophile) is an active-site residue. Glu-222 acts as the Proton donor in catalysis. A glycan (N-linked (GlcNAc...) asparagine) is linked at Asn-267.

Belongs to the glycosyl hydrolase 7 (cellulase C) family.

The protein resides in the secreted. It catalyses the reaction Endohydrolysis of (1-&gt;4)-beta-D-glucosidic linkages in cellulose, lichenin and cereal beta-D-glucans.. In terms of biological role, the biological conversion of cellulose to glucose generally requires three types of hydrolytic enzymes: (1) Endoglucanases which cut internal beta-1,4-glucosidic bonds; (2) Exocellobiohydrolases that cut the disaccharide cellobiose from the non-reducing end of the cellulose polymer chain; (3) Beta-1,4-glucosidases which hydrolyze the cellobiose and other short cello-oligosaccharides to glucose. The polypeptide is Endoglucanase EG-1 (EG-1) (Humicola insolens (Soft-rot fungus)).